The primary structure comprises 2485 residues: Tyrosine-protein phosphatase non-receptor type 13 (2485 aa).

Residues 3–190 (VSLAEALEVR…SGTDQLSCNS (188 aa)) enclose the KIND domain. The disordered stretch occupies residues 186-220 (LSCNSEQKPDRSQAIRDRLRGKGLPTGRSSTSDVL). The span at 192–205 (QKPDRSQAIRDRLR) shows a compositional bias: basic and acidic residues. Serine 240 bears the Phosphoserine mark. A disordered region spans residues 260 to 283 (SDNSGREDSENTFSPYQFKTSGPE). Residues 270–279 (NTFSPYQFKT) show a composition bias toward polar residues. A phosphoserine mark is found at serine 301 and serine 302. The interval 433–467 (RSEASKRFESSSGLPGVDETLSQGQSQRPSRQYET) is disordered. Over residues 452–465 (TLSQGQSQRPSRQY) the composition is skewed to polar residues. The stretch at 469–504 (FEGNLINQEIMLKRQEEELMQLQAKMALRQSRLSLY) forms a coiled coil. The 301-residue stretch at 572 to 872 (RKVNIMLLNG…YQHKFQLQMR (301 aa)) folds into the FERM domain. Phosphoserine is present on residues serine 890, serine 897, serine 908, serine 911, and serine 914. Disordered stretches follow at residues 947 to 975 (QNSSKEKNDKASWEEKPREMSKSYHDLSQ) and 995 to 1049 (TVAE…IEDP). Over residues 950-971 (SKEKNDKASWEEKPREMSKSYH) the composition is skewed to basic and acidic residues. The span at 1020 to 1032 (KLNNSKSVASLNR) shows a compositional bias: polar residues. Phosphoserine is present on residues serine 1029, serine 1033, and serine 1085. A compositionally biased stretch (basic and acidic residues) spans 1033–1042 (SPERRKHESD). Residues 1093–1178 (LVNLKKDAKY…EDVTLVISQP (86 aa)) form the PDZ 1 domain. Disordered regions lie at residues 1227-1258 (HISENSFGPSGGLREGSLSSQDSRTESASLSQ) and 1273-1362 (TWQE…SPPK). Polar residues-rich tracts occupy residues 1243–1258 (SLSSQDSRTESASLSQ), 1273–1288 (TWQESQHGSPSPSVIS), and 1327–1359 (TYSSSQDHQTPKQESSSSVNTSNKMNFKTFSSS). PDZ domains follow at residues 1368–1452 (EVEL…LEKG) and 1501–1588 (EVKL…LCRP). Residues 1608–1630 (AQVLPNSSKDSSQPSCVEQSTSS) are compositionally biased toward polar residues. 2 disordered regions span residues 1608-1665 (AQVL…DLVT) and 1715-1751 (PNKPEFEDSNPSPLPPDMAPGQSYQPQSESASSSSMD). The segment covering 1736–1749 (QSYQPQSESASSSS) has biased composition (low complexity). 2 PDZ domains span residues 1788-1868 (LITL…IGRV) and 1882-1965 (PDIT…ATRN). The interval 1971–1996 (PSSKRSAVSAPKSTKGNGSYSVGSCS) is disordered. Positions 1973 to 1996 (SKRSAVSAPKSTKGNGSYSVGSCS) are enriched in polar residues. One can recognise a Tyrosine-protein phosphatase domain in the interval 2213-2467 (PSKELENLQE…IFCYQVILYV (255 aa)). Substrate is bound by residues aspartate 2378, 2408 to 2414 (CSAGIGR), and glutamine 2452. Cysteine 2408 acts as the Phosphocysteine intermediate in catalysis. Residues 2408-2414 (CSAGIGR) are substrate.

Belongs to the protein-tyrosine phosphatase family. Non-receptor class subfamily. In terms of assembly, interacts (via the first PDZ domain) with PLEKHA1 and PLEKHA2. Interacts (via the second PDZ domain) with TNFRSF6 (Fas receptor) (via C-terminus). Interacts (via the second PDZ domain) with TRIP6 (via the third LIM domain and C-terminus). Interacts (via the third PDZ domain) with NGFR (via C-terminal SVP motif) and PKN2 (via C-terminus). Interacts (via the second or fourth PDZ domains) with PDLIM4 (via C-terminus only or via combined C-terminus and LIM domain, but not LIM domain only). Found in a complex with PDLIM4 and TRIP6. Interacts with PDLIM4; this interaction results in dephosphorylation of SRC 'Tyr-419' by this protein leading to its inactivation. Interacts with BRD7. Interacts with RAPGEF6. Interacts with ARHGAP29. Interacts with PIK3R2; dephosphorylates PIK3R2. Interacts with FBXL2. Interacts (via the FERM domain) with ENTR1. Found in a complex with ENTR1, PTPN13 and GIT1. In terms of tissue distribution, expressed in keratinocytes (at protein level). Present in most tissues with the exception of the liver and skeletal muscle. Most abundant in lung, kidney and fetal brain.

The protein resides in the cytoplasm. Its subcellular location is the cytoskeleton. It localises to the nucleus. The protein localises to the cell projection. It is found in the lamellipodium. The enzyme catalyses O-phospho-L-tyrosyl-[protein] + H2O = L-tyrosyl-[protein] + phosphate. In terms of biological role, tyrosine phosphatase which negatively regulates FAS-induced apoptosis and NGFR-mediated pro-apoptotic signaling. May regulate phosphoinositide 3-kinase (PI3K) signaling through dephosphorylation of PIK3R2. The protein is Tyrosine-protein phosphatase non-receptor type 13 (PTPN13) of Homo sapiens (Human).